The chain runs to 141 residues: Hemoglobin subunit alpha-D (141 aa).

Positions 1–141 (MLTAEDKKLI…VAAVLAEKYR (141 aa)) constitute a Globin domain. Positions 58 and 87 each coordinate heme b.

In terms of assembly, heterotetramer of two alpha-D chains and two beta chains. In terms of tissue distribution, red blood cells.

Functionally, involved in oxygen transport from the lung to the various peripheral tissues. The polypeptide is Hemoglobin subunit alpha-D (HBAD) (Aythya fuligula (Tufted duck)).